The following is a 512-amino-acid chain: Glucose-1-phosphate adenylyltransferase small subunit 2, chloroplastic (512 aa).

The tract at residues 1-21 (MAAIGVLKVPPSSSSSSSSSS) is disordered. The transit peptide at 1–63 (MAAIGVLKVP…RNPFIVSPKA (63 aa)) directs the protein to the chloroplast. Residues 12–21 (SSSSSSSSSS) are compositionally biased toward low complexity.

It belongs to the bacterial/plant glucose-1-phosphate adenylyltransferase family. In terms of assembly, heterotetramer. As to expression, leaves and seeds.

Its subcellular location is the plastid. It is found in the chloroplast. The catalysed reaction is alpha-D-glucose 1-phosphate + ATP + H(+) = ADP-alpha-D-glucose + diphosphate. It participates in glycan biosynthesis; starch biosynthesis. Activated by 3'phosphoglycerate, inhibited by orthophosphate. Allosteric regulation. Functionally, this protein plays a role in synthesis of starch. It catalyzes the synthesis of the activated glycosyl donor, ADP-glucose from Glc-1-P and ATP. In Vicia faba (Broad bean), this protein is Glucose-1-phosphate adenylyltransferase small subunit 2, chloroplastic (AGPP).